Reading from the N-terminus, the 377-residue chain is RCC1 domain-containing protein 1 (377 aa).

Residues 1-172 are interaction with KDM8; sequence MAEKRHGAWF…VRQLELGAEH (172 aa). Residues 6–57 form an RCC1 1 repeat; that stretch reads HGAWFGFGFCGFGQALGSGNSHHSVYSPEPLHASDDICQVSAGWSYTALVTR. At Arg144 the chain carries (3R)-3-hydroxyarginine. RCC1 repeat units lie at residues 179-230, 232-289, and 319-372; these read AGQV…CLSE, GDIY…IAIQ, and TGEL…VYAM.

Found in a complex with KDM8. Interacts (via N-terminus) with KDM8 (via N-terminus). In terms of processing, specifically hydroxylated (with R stereochemistry) at C-3 of ARG-141 by KDM8.

It is found in the chromosome. In terms of biological role, plays a role in transcriptional repression of satellite repeats, possibly by regulating H3K36 methylation levels in centromeric regions together with KDM8. Possibly together with KDM8, is involved in proper mitotic spindle organization and chromosome segregation. Plays a role in regulating alpha-tubulin deacetylation and cytoskeletal microtubule stability, thereby promoting cell migration and TGF-beta-induced epithelial to mesenchymal transition (EMT), potentially through the inhibition of KDM8. This is RCC1 domain-containing protein 1 (Rccd1) from Mus musculus (Mouse).